Consider the following 279-residue polypeptide: Ribosomal RNA small subunit methyltransferase J (279 aa).

S-adenosyl-L-methionine is bound by residues Glu-138–Arg-139 and Asp-194.

This sequence belongs to the methyltransferase superfamily. RsmJ family.

The protein resides in the cytoplasm. The enzyme catalyses guanosine(1516) in 16S rRNA + S-adenosyl-L-methionine = N(2)-methylguanosine(1516) in 16S rRNA + S-adenosyl-L-homocysteine + H(+). Specifically methylates the guanosine in position 1516 of 16S rRNA. This chain is Ribosomal RNA small subunit methyltransferase J, found in Acinetobacter baumannii (strain AYE).